We begin with the raw amino-acid sequence, 232 residues long: Ubiquinone biosynthesis O-methyltransferase (232 aa).

S-adenosyl-L-methionine-binding residues include arginine 36, glycine 55, aspartate 76, and leucine 120.

The protein belongs to the methyltransferase superfamily. UbiG/COQ3 family.

The catalysed reaction is a 3-demethylubiquinol + S-adenosyl-L-methionine = a ubiquinol + S-adenosyl-L-homocysteine + H(+). It carries out the reaction a 3-(all-trans-polyprenyl)benzene-1,2-diol + S-adenosyl-L-methionine = a 2-methoxy-6-(all-trans-polyprenyl)phenol + S-adenosyl-L-homocysteine + H(+). Its pathway is cofactor biosynthesis; ubiquinone biosynthesis. Its function is as follows. O-methyltransferase that catalyzes the 2 O-methylation steps in the ubiquinone biosynthetic pathway. This chain is Ubiquinone biosynthesis O-methyltransferase, found in Pseudomonas putida (strain W619).